A 51-amino-acid chain; its full sequence is uncharacterized protein (51 aa).

The next 2 helical transmembrane spans lie at 6-26 (LLGVISFICWIVACVLTICID) and 28-48 (SSVFSQALAQGMCAYLTFVLL).

The protein localises to the host membrane. This is an uncharacterized protein from Enterobacteria phage T4 (Bacteriophage T4).